The sequence spans 151 residues: Aspartate carbamoyltransferase regulatory chain (151 aa).

Zn(2+) is bound by residues C107, C112, C135, and C138.

This sequence belongs to the PyrI family. Contains catalytic and regulatory chains. The cofactor is Zn(2+).

Functionally, involved in allosteric regulation of aspartate carbamoyltransferase. This Psychromonas ingrahamii (strain DSM 17664 / CCUG 51855 / 37) protein is Aspartate carbamoyltransferase regulatory chain.